Consider the following 249-residue polypeptide: Undecaprenyl-diphosphatase (249 aa).

Helical transmembrane passes span 11-31 (GLTE…TAIF), 35-55 (PDVG…LIFV), 80-100 (LVLS…FIES), 101-121 (VFSS…LMLL), 135-155 (IPYL…LPGI), 180-200 (FLMS…KVAF), 202-222 (TEQI…LYLV), and 226-246 (VIGG…FFVL).

Belongs to the UppP family.

Its subcellular location is the cell membrane. It carries out the reaction di-trans,octa-cis-undecaprenyl diphosphate + H2O = di-trans,octa-cis-undecaprenyl phosphate + phosphate + H(+). Catalyzes the dephosphorylation of undecaprenyl diphosphate (UPP). The protein is Undecaprenyl-diphosphatase of Methanococcus maripaludis (strain C6 / ATCC BAA-1332).